A 195-amino-acid polypeptide reads, in one-letter code: Small ribosomal subunit protein bS16 (195 aa).

Residues 171–181 (PEAPVAAAEPA) show a composition bias toward low complexity. The tract at residues 171-195 (PEAPVAAAEPAPEVKAEEKEEGGEA) is disordered.

Belongs to the bacterial ribosomal protein bS16 family.

The protein is Small ribosomal subunit protein bS16 of Chlorobium luteolum (strain DSM 273 / BCRC 81028 / 2530) (Pelodictyon luteolum).